A 450-amino-acid polypeptide reads, in one-letter code: Akuammiline synthase 2 (450 aa).

Catalysis depends on His154, which acts as the Proton acceptor. The Nuclear localization signal signature appears at 218-225 (MRRFVFDA). The active-site Proton acceptor is the Asp376.

Belongs to the plant acyltransferase family. Monomer.

Its subcellular location is the cytoplasm. The protein resides in the nucleus. It carries out the reaction rhazimol + acetyl-CoA = akuammiline + CoA + H(+). The protein operates within alkaloid biosynthesis. Functionally, acyltransferase involved in the biosynthesis of akuammilan monoterpene indole alkaloids (MIAs) natural products, components with various biological properties such as antidiabetic, antibacterial, anti-inflammatory, anticancer, and antimalarial activities. Catalyzes the conversion of rhazimol to akuammiline. This chain is Akuammiline synthase 2, found in Alstonia scholaris (Dogbane).